Consider the following 479-residue polypeptide: Transcription factor CP2-like protein 1 (479 aa).

In terms of domain architecture, Grh/CP2 DB spans 43–280 (RLPPLQYVLC…PSPSYNGSPN (238 aa)). Disordered stretches follow at residues 219–245 (KPKGADRKQKTDREKMEKRTAQEKEKY) and 271–301 (PSPSYNGSPNSFGLGEGNASPTHPVEALPVG). The segment covering 221-245 (KGADRKQKTDREKMEKRTAQEKEKY) has biased composition (basic and acidic residues). The interval 261–365 (PDVAYQVNSA…IRLFNAIKGR (105 aa)) is SAM2-like domain. Over residues 271 to 281 (PSPSYNGSPNS) the composition is skewed to polar residues.

The protein belongs to the grh/CP2 family. CP2 subfamily. Forms homohexamers via its SAM-like domain. Interacts with MTA1; which is indispensable for TFCP2l1-mediated self-renewal-promoting effect and endoderm-inhibiting action. Highly expressed in placental JEG-3 cells and very low levels of expression in non-steroidogenic cells. No expression was seen in adrenal NCI-H295A cells or in adrenal tissue.

It is found in the nucleus. In terms of biological role, transcription factor that facilitates establishment and maintenance of pluripotency in embryonic stem cells (ESCs). With KLF2, acts as the major effector of self-renewal that mediates induction of pluripotency downstream of LIF/STAT3 and Wnt/beta-catenin signaling. Required for normal duct development in the salivary gland and kidney. Coordinates the development of the kidney collecting ducts intercalated (IC) and principal (PC) cells, which regulate acid-base and salt-water homeostasis, respectively. Regulates the expression of IC genes including subunits B1 and D2 of the V-ATPase complex, OXGR1, CA12, SLC4A1, AQP6 and IC-specific transcription factor FOXI1. Also regulates the expression of JAG1 and subsequent notch signaling in the collecting duct. JAG1 initiates notch signaling in PCs but inhibits notch signaling in ICs. Acts as a transcriptional suppressor that may suppress UBP1-mediated transcriptional activation. Modulates the placental expression of CYP11A1. In Homo sapiens (Human), this protein is Transcription factor CP2-like protein 1 (TFCP2L1).